A 336-amino-acid chain; its full sequence is Holliday junction branch migration complex subunit RuvB (336 aa).

The interval 4-184 (SDRLISSQSI…FGIVQRLEYY (181 aa)) is large ATPase domain (RuvB-L). ATP is bound by residues Ile-23, Arg-24, Gly-65, Lys-68, Thr-69, Thr-70, 131-133 (EDY), Arg-174, Tyr-184, and Arg-221. Thr-69 is a binding site for Mg(2+). Residues 185–255 (SVDSLTKIVA…MAQQALEMLE (71 aa)) form a small ATPAse domain (RuvB-S) region. The interval 258–336 (QHGFDLMDRK…HFGFSAIEQE (79 aa)) is head domain (RuvB-H). Positions 313 and 318 each coordinate DNA.

It belongs to the RuvB family. In terms of assembly, homohexamer. Forms an RuvA(8)-RuvB(12)-Holliday junction (HJ) complex. HJ DNA is sandwiched between 2 RuvA tetramers; dsDNA enters through RuvA and exits via RuvB. An RuvB hexamer assembles on each DNA strand where it exits the tetramer. Each RuvB hexamer is contacted by two RuvA subunits (via domain III) on 2 adjacent RuvB subunits; this complex drives branch migration. In the full resolvosome a probable DNA-RuvA(4)-RuvB(12)-RuvC(2) complex forms which resolves the HJ.

The protein localises to the cytoplasm. The enzyme catalyses ATP + H2O = ADP + phosphate + H(+). Functionally, the RuvA-RuvB-RuvC complex processes Holliday junction (HJ) DNA during genetic recombination and DNA repair, while the RuvA-RuvB complex plays an important role in the rescue of blocked DNA replication forks via replication fork reversal (RFR). RuvA specifically binds to HJ cruciform DNA, conferring on it an open structure. The RuvB hexamer acts as an ATP-dependent pump, pulling dsDNA into and through the RuvAB complex. RuvB forms 2 homohexamers on either side of HJ DNA bound by 1 or 2 RuvA tetramers; 4 subunits per hexamer contact DNA at a time. Coordinated motions by a converter formed by DNA-disengaged RuvB subunits stimulates ATP hydrolysis and nucleotide exchange. Immobilization of the converter enables RuvB to convert the ATP-contained energy into a lever motion, pulling 2 nucleotides of DNA out of the RuvA tetramer per ATP hydrolyzed, thus driving DNA branch migration. The RuvB motors rotate together with the DNA substrate, which together with the progressing nucleotide cycle form the mechanistic basis for DNA recombination by continuous HJ branch migration. Branch migration allows RuvC to scan DNA until it finds its consensus sequence, where it cleaves and resolves cruciform DNA. The protein is Holliday junction branch migration complex subunit RuvB of Legionella pneumophila (strain Paris).